Here is a 152-residue protein sequence, read N- to C-terminus: MQLTELIETTVTGLGYELVDLERTGRGMLCIYIDQLAGISLEDCEKVTRQLQHVLTVENIDYERLEVSSPGLDRPLKKLADFERFAGSEVSVTLKKPLDGRKTYRGILHAPNGETIGLEFEGKKGEAAMLDFTLADIDKARLIPQVDFRSRK.

It belongs to the RimP family.

The protein localises to the cytoplasm. Required for maturation of 30S ribosomal subunits. The protein is Ribosome maturation factor RimP of Burkholderia ambifaria (strain MC40-6).